The chain runs to 296 residues: Deleted in azoospermia-like (296 aa).

The segment covering 1 to 18 (MSAANPETPNSTISREAN) has biased composition (polar residues). Positions 1–25 (MSAANPETPNSTISREANTQSSSAA) are disordered. An RRM domain is found at 40–115 (NTVFVGGIDV…KKLKLGPAIR (76 aa)). The segment at 80–132 (KGYGFVSFFNDVDVQKIVESQINFHGKKLKLGPAIRKQNLCAYHVQPRPLVFN) is homodimerization. One can recognise a DAZ domain in the interval 167-190 (AYPPYPNSPVQVITGYQLPVYNYQ). At Y277 the chain carries Phosphotyrosine.

Belongs to the RRM DAZ family. As to quaternary structure, homodimer and heterodimer. Forms a heterodimer with DAZ. Interacts with BOLL, DAZAP1 and DAZAP2. Interacts with PUM2 Multiple DAZL RRMs can bind to a single RNA containing multiple GUU triplets. As to expression, testis specific.

The protein localises to the cytoplasm. Its subcellular location is the nucleus. Its function is as follows. RNA-binding protein, which is essential for gametogenesis in both males and females. Plays a central role during spermatogenesis. Acts by binding to the 3'-UTR of mRNA, specifically recognizing GUU triplets, and thereby regulating the translation of key transcripts. In Callithrix jacchus (White-tufted-ear marmoset), this protein is Deleted in azoospermia-like (DAZL).